The primary structure comprises 331 residues: Tetraacyldisaccharide 4'-kinase (331 aa).

ATP is bound at residue 57–64; sequence SVGGNGKT.

It belongs to the LpxK family.

The enzyme catalyses a lipid A disaccharide + ATP = a lipid IVA + ADP + H(+). Its pathway is glycolipid biosynthesis; lipid IV(A) biosynthesis; lipid IV(A) from (3R)-3-hydroxytetradecanoyl-[acyl-carrier-protein] and UDP-N-acetyl-alpha-D-glucosamine: step 6/6. In terms of biological role, transfers the gamma-phosphate of ATP to the 4'-position of a tetraacyldisaccharide 1-phosphate intermediate (termed DS-1-P) to form tetraacyldisaccharide 1,4'-bis-phosphate (lipid IVA). This is Tetraacyldisaccharide 4'-kinase from Histophilus somni (strain 2336) (Haemophilus somnus).